A 101-amino-acid chain; its full sequence is Urease subunit beta (101 aa).

This sequence belongs to the urease beta subunit family. As to quaternary structure, heterotrimer of UreA (gamma), UreB (beta) and UreC (alpha) subunits. Three heterotrimers associate to form the active enzyme.

The protein localises to the cytoplasm. It carries out the reaction urea + 2 H2O + H(+) = hydrogencarbonate + 2 NH4(+). Its pathway is nitrogen metabolism; urea degradation; CO(2) and NH(3) from urea (urease route): step 1/1. This is Urease subunit beta from Pseudomonas aeruginosa (strain LESB58).